We begin with the raw amino-acid sequence, 1169 residues long: Polyamine-transporting ATPase 13A2 (1169 aa).

Topologically, residues 1 to 44 are cytoplasmic; sequence MSADSSLLMGSTPPSYGTLTTGTSIDPLSSSASSVRLSGYCGSP. Residues 45-65 lie within the membrane without spanning it; sequence WRAIGYHAAVWMLAGIPWLLF. Topologically, residues 66 to 225 are cytoplasmic; sequence RWKPLWGVRL…ISIPVKSYLQ (160 aa). The helical transmembrane segment at 226 to 246 threads the bilayer; that stretch reads LLADEALNPYYGFQAFSIALW. Residues 247–250 are Lumenal-facing; it reads LADH. The helical transmembrane segment at 251–271 threads the bilayer; the sequence is YYWYALCIFLISAISICLALY. Residues 272 to 422 are Cytoplasmic-facing; it reads KTRKQSLTLR…SFKFYKHSMK (151 aa). A helical membrane pass occupies residues 423 to 443; the sequence is FVAALSVLALLGTVYSIIILY. Residues 444–458 are Lumenal-facing; the sequence is RNRVPVREIVIRALD. The chain crosses the membrane as a helical span at residues 459–479; sequence LVTVVVPPALPAAMTVCTLYA. Residues 480–919 are Cytoplasmic-facing; the sequence is QSRLRTQGIF…REGRCSLDTS (440 aa). Aspartate 508 functions as the 4-aspartylphosphate intermediate in the catalytic mechanism. Mg(2+) contacts are provided by aspartate 867 and aspartate 871. Residues 920–940 traverse the membrane as a helical segment; it reads FSVFKYMALYSLTQFISVLIL. Residues 941–946 lie on the Lumenal side of the membrane; it reads YTINTN. Residues 947-967 form a helical membrane-spanning segment; sequence LGDLQFLAIDLVITTTVAVLM. Residues 968–993 are Cytoplasmic-facing; that stretch reads SRTGPALTLVRARPPGALLSVPVLGS. Residues 994–1014 traverse the membrane as a helical segment; sequence LLLQVALVAGIQLGGYFLVIA. Topologically, residues 1015 to 1037 are lumenal; the sequence is QPWFVPLNRTVPAPDNLPNYENT. A glycan (N-linked (GlcNAc...) asparagine) is linked at asparagine 1022. The helical transmembrane segment at 1038-1058 threads the bilayer; that stretch reads VVFSLSGFQYLILAAAVSKGA. Over 1059–1069 the chain is Cytoplasmic; that stretch reads PFRQPLYTNVP. A helical transmembrane segment spans residues 1070-1090; sequence FLVALALLGSVLVGLILVPGL. Topologically, residues 1091 to 1106 are lumenal; sequence LQGPLGLRNIVDSSFK. A helical transmembrane segment spans residues 1107–1127; it reads LLLLGLVAFNFVGAFMLESVL. At 1128 to 1169 the chain is on the cytoplasmic side; sequence DQCLPACLRWLRPKRASKKQFKRLQQELAEHPWPTLPVGSVR.

The protein belongs to the cation transport ATPase (P-type) (TC 3.A.3) family. Type V subfamily. In terms of assembly, interacts with MYCBP2; the interaction inhibits the ubiquitination of TSC2 by MYCBP2. Interacts with HDAC6; the interaction results in recruitment of HDAC6 to lysosomes to promote CTTN deacetylation. Autophosphorylated. Accumulates in an inactive autophosphorylated state and autophosphorylation is stimulated by phosphatidic acid and phosphatidylinositol 3,5-bisphosphate but not by Mn(2+) or Zn(2+). The presence of spermine results in a dose-dependent reduction in autophosphorylation.

The protein resides in the lysosome membrane. Its subcellular location is the late endosome membrane. It is found in the endosome. It localises to the multivesicular body membrane. The protein localises to the cytoplasmic vesicle. The protein resides in the autophagosome membrane. The catalysed reaction is spermidine(out) + ATP + H2O = spermidine(in) + ADP + phosphate + H(+). It carries out the reaction spermine(out) + ATP + H2O = spermine(in) + ADP + phosphate + H(+). Accumulates in an inactive autophosphorylated state. The presence of spermine results in a dose-dependent reduction in autophosphorylation. Functionally, ATPase which acts as a lysosomal polyamine exporter with high affinity for spermine. Also stimulates cellular uptake of polyamines and protects against polyamine toxicity. Plays a role in intracellular cation homeostasis and the maintenance of neuronal integrity. Contributes to cellular zinc homeostasis. Confers cellular protection against Mn(2+) and Zn(2+) toxicity and mitochondrial stress. Required for proper lysosomal and mitochondrial maintenance. Regulates the autophagy-lysosome pathway through the control of SYT11 expression at both transcriptional and post-translational levels. Facilitates recruitment of deacetylase HDAC6 to lysosomes to deacetylate CTTN, leading to actin polymerization, promotion of autophagosome-lysosome fusion and completion of autophagy. Promotes secretion of exosomes as well as secretion of SCNA via exosomes. Plays a role in lipid homeostasis. The chain is Polyamine-transporting ATPase 13A2 from Mus musculus (Mouse).